We begin with the raw amino-acid sequence, 330 residues long: Phenylalanine--tRNA ligase alpha subunit (330 aa).

A Mg(2+)-binding site is contributed by glutamate 254.

Belongs to the class-II aminoacyl-tRNA synthetase family. Phe-tRNA synthetase alpha subunit type 1 subfamily. In terms of assembly, tetramer of two alpha and two beta subunits. Mg(2+) serves as cofactor.

The protein localises to the cytoplasm. The catalysed reaction is tRNA(Phe) + L-phenylalanine + ATP = L-phenylalanyl-tRNA(Phe) + AMP + diphosphate + H(+). The protein is Phenylalanine--tRNA ligase alpha subunit (pheS) of Neisseria meningitidis serogroup B (strain ATCC BAA-335 / MC58).